Reading from the N-terminus, the 356-residue chain is uncharacterized protein (356 aa).

The protein resides in the cytoplasm. It is found in the nucleus. This is an uncharacterized protein from Saccharomyces cerevisiae (strain ATCC 204508 / S288c) (Baker's yeast).